The following is a 530-amino-acid chain: UDP-N-acetylmuramoyl-L-alanyl-D-glutamate--2,6-diaminopimelate ligase (530 aa).

Residue Leu52 coordinates UDP-N-acetyl-alpha-D-muramoyl-L-alanyl-D-glutamate. ATP is bound at residue 139 to 145 (GTSGKTT). UDP-N-acetyl-alpha-D-muramoyl-L-alanyl-D-glutamate is bound by residues 181 to 182 (TT), Ser208, and Arg216. An N6-carboxylysine modification is found at Lys248. Meso-2,6-diaminopimelate is bound by residues Arg410, 434–437 (DNPR), Gly488, and Glu492. The Meso-diaminopimelate recognition motif signature appears at 434–437 (DNPR).

It belongs to the MurCDEF family. MurE subfamily. Mg(2+) is required as a cofactor. Post-translationally, carboxylation is probably crucial for Mg(2+) binding and, consequently, for the gamma-phosphate positioning of ATP.

Its subcellular location is the cytoplasm. The catalysed reaction is UDP-N-acetyl-alpha-D-muramoyl-L-alanyl-D-glutamate + meso-2,6-diaminopimelate + ATP = UDP-N-acetyl-alpha-D-muramoyl-L-alanyl-gamma-D-glutamyl-meso-2,6-diaminopimelate + ADP + phosphate + H(+). Its pathway is cell wall biogenesis; peptidoglycan biosynthesis. In terms of biological role, catalyzes the addition of meso-diaminopimelic acid to the nucleotide precursor UDP-N-acetylmuramoyl-L-alanyl-D-glutamate (UMAG) in the biosynthesis of bacterial cell-wall peptidoglycan. The protein is UDP-N-acetylmuramoyl-L-alanyl-D-glutamate--2,6-diaminopimelate ligase of Mycobacterium leprae (strain TN).